The following is a 442-amino-acid chain: Interferon-related developmental regulator 2 (442 aa).

A compositionally biased stretch (basic residues) spans 1-15 (MPRARKGNTLRKGGQ). Residues 1–71 (MPRARKGNTL…DVVDEQGQQE (71 aa)) are disordered. Polar residues predominate over residues 43–56 (TASECPSLLSTTAE).

Belongs to the IFRD family. In terms of assembly, associates with ribosomes; promoting ribosome inactivation. In terms of tissue distribution, expressed in many tissues including heart, brain, placenta, lung, liver, skeletal muscle, kidney and pancreas.

Functionally, ribosome-binding protein that acts as an inhibitor of mRNA translation by promoting ribosome inactivation. Associates with the P- and E-sites of the ribosome and inserts a C-terminal helix into the mRNA exit channel to preclude translation. This chain is Interferon-related developmental regulator 2, found in Homo sapiens (Human).